The chain runs to 306 residues: Protein YIPF1 (306 aa).

Topologically, residues 1-119 (MAAVDDLQFE…VRLYIRSNPD (119 aa)) are cytoplasmic. The segment at 30-63 (IEDPSVSFGHQPRPPGSVGREEDEELLGNNDSDE) is disordered. Over residues 50-63 (EEDEELLGNNDSDE) the composition is skewed to acidic residues. Residues 120–140 (LYGPFWICATLVFAIAISGNL) traverse the membrane as a helical segment. Residues 141-162 (SNFLIHLGEKTYHYVPEFQKVS) lie on the Lumenal side of the membrane. A helical transmembrane segment spans residues 163–183 (IAATVIYAYAWLVPLALWGFL). The Cytoplasmic segment spans residues 184–200 (LWRNSKVMSMVSYSFLE). Residues 201 to 221 (IVCVYGYSLFIYIPTAVLWII) form a helical membrane-spanning segment. Over 222–227 (PQRVVR) the chain is Lumenal. Residues 228–248 (WVLVMIALGVSGSVLVMTFWP) form a helical membrane-spanning segment. Residues 249-256 (AVREDNRR) lie on the Cytoplasmic side of the membrane. Residues 257–277 (VALATIVTIVLLHVLLSVGCL) traverse the membrane as a helical segment. The Lumenal portion of the chain corresponds to 278–306 (AYFFDAPEMDHLPAAITTPNQTVTAAKSS). Residue Asn-297 is glycosylated (N-linked (GlcNAc...) asparagine).

It belongs to the YIP1 family. In terms of assembly, interacts with YIPF6; this interaction may stabilize YIPF1. May also form a ternary complex with YIPF2 and YIPF6.

It localises to the golgi apparatus. The protein localises to the cis-Golgi network membrane. Its subcellular location is the trans-Golgi network membrane. The protein resides in the late endosome membrane. The protein is Protein YIPF1 (Yipf1) of Mus musculus (Mouse).